The chain runs to 403 residues: Tyrosine--tRNA ligase (403 aa).

Residues 42–51 carry the 'HIGH' region motif; the sequence is PTAPDLHLGH. Residues 226–230 carry the 'KMSKS' region motif; it reads KMSKS. ATP is bound at residue K229. Residues 336-396 enclose the S4 RNA-binding domain; that stretch reads MPISAVLNKA…GKKAFGRVTL (61 aa).

It belongs to the class-I aminoacyl-tRNA synthetase family. TyrS type 2 subfamily. In terms of assembly, homodimer.

The protein resides in the cytoplasm. It catalyses the reaction tRNA(Tyr) + L-tyrosine + ATP = L-tyrosyl-tRNA(Tyr) + AMP + diphosphate + H(+). Catalyzes the attachment of tyrosine to tRNA(Tyr) in a two-step reaction: tyrosine is first activated by ATP to form Tyr-AMP and then transferred to the acceptor end of tRNA(Tyr). In Pseudomonas syringae pv. syringae (strain B728a), this protein is Tyrosine--tRNA ligase.